We begin with the raw amino-acid sequence, 423 residues long: Acyl-coenzyme A diphosphatase FITM2 (423 aa).

The disordered stretch occupies residues Met1 to Ala47. The Cytoplasmic segment spans residues Met1–Lys75. Residues Val76–Pro96 form a helical membrane-spanning segment. Over Lys97 to Lys113 the chain is Lumenal. The chain crosses the membrane as a helical span at residues Ile114–Ile134. Topologically, residues Thr135–His146 are cytoplasmic. Residues Phe147 to Val167 traverse the membrane as a helical segment. The Lumenal portion of the chain corresponds to Glu168–Leu191. The chain crosses the membrane as a helical span at residues Trp192–Ile212. His200 is a catalytic residue. Over Glu213–Thr270 the chain is Cytoplasmic. Residues Leu271–Leu291 traverse the membrane as a helical segment. Residues Tyr292–Lys299 lie on the Lumenal side of the membrane. The active site involves His294. Residues Val300–Thr320 form a helical membrane-spanning segment. Topologically, residues Pro321–Ser423 are cytoplasmic. Disordered regions lie at residues Phe344 to Gln381 and Ala400 to Ser423. Positions Ser351–Asn367 are enriched in low complexity. Residues Gln409–Ser423 show a composition bias toward basic and acidic residues.

This sequence belongs to the FIT family. FIT2 subfamily.

The protein resides in the endoplasmic reticulum membrane. It catalyses the reaction an acyl-CoA + H2O = an acyl-4'-phosphopantetheine + adenosine 3',5'-bisphosphate + 2 H(+). Its function is as follows. Fatty acyl-coenzyme A (CoA) diphosphatase that hydrolyzes fatty acyl-CoA to yield acyl-4'-phosphopantetheine and adenosine 3',5'-bisphosphate. Preferentially hydrolyzes unsaturated long-chain acyl-CoA substrates in the endoplasmic reticulum (ER) lumen. This catalytic activity is required for maintaining ER structure and for lipid droplets (LDs) biogenesis, which are lipid storage organelles involved in maintaining lipid and energy homeostasis. May directly bind to diacylglycerol (DAGs) and triacylglycerol, which is also important for LD biogenesis. May support directional budding of nacent LDs from the ER into the cytosol by reducing DAG levels at sites of LD formation. Plays a role in the regulation of cell morphology and cytoskeletal organization. Required for correct morphology of nociceptive multi-dendritic sensory neurons. Required for normal mechanical amplification in hearing. The protein is Acyl-coenzyme A diphosphatase FITM2 of Drosophila melanogaster (Fruit fly).